The following is a 152-amino-acid chain: ARL14 effector protein-like (152 aa).

The interval 1 to 21 (MNEQSEKNNSIQERHTDHSFP) is disordered.

The protein is ARL14 effector protein-like (ARL14EPL) of Homo sapiens (Human).